Here is a 293-residue protein sequence, read N- to C-terminus: AKT-interacting protein (293 aa).

The span at 1–11 shows a compositional bias: polar residues; sequence MNPFWSMSTSS. The segment at 1 to 63 is disordered; that stretch reads MNPFWSMSTS…TSPAPAAQST (63 aa). The span at 14–23 shows a compositional bias: basic and acidic residues; the sequence is KRSEGEEKTL. Position 30 is a phosphoserine (Ser30). The 149-residue stretch at 74 to 222 folds into the UBC core domain; the sequence is YLEYSLLAEF…VVDSVQVCTA (149 aa). A compositionally biased stretch (basic and acidic residues) spans 253 to 265; that stretch reads MLTQKKKPEEQHN. Residues 253-293 form a disordered region; that stretch reads MLTQKKKPEEQHNKSVHVAGLSWVKPGSVQPFSKEEKTVAT.

It belongs to the ubiquitin-conjugating enzyme family. FTS subfamily. In terms of assembly, component of the FTS/Hook/FHIP complex (FHF complex), composed of AKTIP/FTS, FHIP1B, and one or more members of the Hook family of proteins HOOK1, HOOK2, and HOOK3. Interacts directly with HOOK1, HOOK2 and HOOK3. The FHF complex associates with the homotypic vesicular sorting complex (the HOPS complex). Also interacts with AKT1. May interact with FHIP1A.

It localises to the cytoplasm. The protein localises to the cell membrane. Its function is as follows. Component of the FTS/Hook/FHIP complex (FHF complex). The FHF complex may function to promote vesicle trafficking and/or fusion via the homotypic vesicular protein sorting complex (the HOPS complex). Regulates apoptosis by enhancing phosphorylation and activation of AKT1. Increases release of TNFSF6 via the AKT1/GSK3B/NFATC1 signaling cascade. FHF complex promotes the distribution of AP-4 complex to the perinuclear area of the cell. The protein is AKT-interacting protein (AKTIP) of Pongo abelii (Sumatran orangutan).